The following is a 251-amino-acid chain: 3-deoxy-manno-octulosonate cytidylyltransferase (251 aa).

It belongs to the KdsB family.

The protein resides in the cytoplasm. The catalysed reaction is 3-deoxy-alpha-D-manno-oct-2-ulosonate + CTP = CMP-3-deoxy-beta-D-manno-octulosonate + diphosphate. Its pathway is nucleotide-sugar biosynthesis; CMP-3-deoxy-D-manno-octulosonate biosynthesis; CMP-3-deoxy-D-manno-octulosonate from 3-deoxy-D-manno-octulosonate and CTP: step 1/1. The protein operates within bacterial outer membrane biogenesis; lipopolysaccharide biosynthesis. Activates KDO (a required 8-carbon sugar) for incorporation into bacterial lipopolysaccharide in Gram-negative bacteria. This Brucella canis (strain ATCC 23365 / NCTC 10854 / RM-666) protein is 3-deoxy-manno-octulosonate cytidylyltransferase.